The chain runs to 857 residues: MASPAPAFSLANLLNGSYGVDTPEDVERLRSEQREEAAAACRNYRPLPAVDVSESVTEDAHSLRTPDGAPAEAVSDEFVTYGAEDYLEKSDDELLVAFETMVKPMRIGQLWCPAFNKCSFISSIAMARALLLAPRTSNRTMKCFEDLVAAIYTKSDFYYGEECEADDVQMDISSRDVPGYSFEPWSRTSGFEPPPICEACDMIMYQCPCFDFNALKKSCAERTFADDYVIEGLDGVVDNATLLSNLGPFLVPVKCQYENCPTPTLAIPPDLNRATDRVDINLVQSICDSTLPTHSNYDDSFHQVFVESADYSIDLDHVRLRQSDLIAKIPDSGHMIPVLNTGSGHKRVGTTKEVLTAIKKRNADVPELGDSVNLSRLSKAVAERFFISYINGNSLASSNFVNVVSNFHDYMEKWKSSGLSYDDLPDLHAENLQFYDHMIKSDVKPVVSDTLNIDRPVPATITYHKKSITSQFSPLFTALFERFQRCLRERIILPVGKISSLEMAGFDVKNKHCLEIDLSKFDKSQGEFHLLIQEHILNGLGCPAPITKWWCDFHRFSYIRDRRAGVGMPISFQRRTGDAFTYFGNTIVTMAEFAWCYDTDQFEKLLFSGDDSLGFSLLPPVGDPSKFTTLFNMEAKVMEPAVPYICSKFLLSDEFGNTFSVPDPLREVQRLGTKKIPYSDNDEFLFAHFMSFVDRLKFLDRMSQSCIDQLSIFFELKYKKSGEEAALMLGAFKKYTANFQSYKELYYSDRRQCELINSFCSTEFRVERVNSNKQRKKYGIERRCNDKRRTPTGSYGGGEEAETKISQAESTGTRSQKSQRESAFKSQTVPLPTVLSSRWFGTDRVEPPCERGGVTRA.

Residues 511–624 (KHCLEIDLSK…FSLLPPVGDP (114 aa)) form the RdRp catalytic domain. The segment at 782 to 829 (RRCNDKRRTPTGSYGGGEEAETKISQAESTGTRSQKSQRESAFKSQTV) is disordered. Polar residues predominate over residues 804 to 816 (KISQAESTGTRSQ).

Belongs to the ssRNA positive-strand viruses RNA-directed RNA polymerase family. As to quaternary structure, interacts with replication protein 1a.

The catalysed reaction is RNA(n) + a ribonucleoside 5'-triphosphate = RNA(n+1) + diphosphate. Functionally, RNA-dependent RNA polymerase which replicates the viral genome composed of 3 RNA segments, RNA1, RNA2 and RNA3. The polypeptide is RNA-directed RNA polymerase 2a (Cucumis sativus (Cucumber)).